Here is a 570-residue protein sequence, read N- to C-terminus: GTPase Obg (570 aa).

One can recognise an Obg domain in the interval 2-168; that stretch reads SDFVDRVTVH…RDIILELKSI (167 aa). The tract at residues 15–43 is disordered; it reads GDGGNGSAGIRREKYKPLAGPNGGNGGKG. The OBG-type G domain maps to 169–349; that stretch reads ADVALVGFPS…LNFALAKLVK (181 aa). GTP-binding positions include 175-182, 200-204, 221-224, 301-304, and 330-332; these read GFPSAGKS, FTTLV, DVPG, NKID, and STA. Mg(2+) is bound by residues S182 and T202. In terms of domain architecture, OCT spans 382–468; it reads GRNAQVREFE…ERAVAFDWDP (87 aa). A disordered region spans residues 521-570; the sequence is RAAMQAERAAGHWADPSIDDDRHDEQSLFGRGEVEEYEDEPGADGSRQLD.

This sequence belongs to the TRAFAC class OBG-HflX-like GTPase superfamily. OBG GTPase family. In terms of assembly, monomer. The cofactor is Mg(2+).

It localises to the cytoplasm. An essential GTPase which binds GTP, GDP and possibly (p)ppGpp with moderate affinity, with high nucleotide exchange rates and a fairly low GTP hydrolysis rate. Plays a role in control of the cell cycle, stress response, ribosome biogenesis and in those bacteria that undergo differentiation, in morphogenesis control. The sequence is that of GTPase Obg from Bifidobacterium animalis subsp. lactis (strain AD011).